The chain runs to 427 residues: Homogentisate 1,2-dioxygenase (427 aa).

His285 (proton acceptor) is an active-site residue. His328 and Glu334 together coordinate Fe cation. 2 residues coordinate homogentisate: Tyr343 and His364. Residue His364 participates in Fe cation binding.

The protein belongs to the homogentisate dioxygenase family. As to quaternary structure, hexamer; dimer of trimers. The cofactor is Fe cation.

It catalyses the reaction homogentisate + O2 = 4-maleylacetoacetate + H(+). Its pathway is amino-acid degradation; L-phenylalanine degradation; acetoacetate and fumarate from L-phenylalanine: step 4/6. Involved in the catabolism of homogentisate (2,5-dihydroxyphenylacetate or 2,5-OH-PhAc), a central intermediate in the degradation of phenylalanine and tyrosine. Catalyzes the oxidative ring cleavage of the aromatic ring of homogentisate to yield maleylacetoacetate. The chain is Homogentisate 1,2-dioxygenase from Caulobacter sp. (strain K31).